A 545-amino-acid chain; its full sequence is Chaperonin GroEL (545 aa).

ATP contacts are provided by residues 30-33 (TLGP), K51, 87-91 (DGTTT), G415, and D495.

The protein belongs to the chaperonin (HSP60) family. Forms a cylinder of 14 subunits composed of two heptameric rings stacked back-to-back. Interacts with the co-chaperonin GroES.

The protein localises to the cytoplasm. It catalyses the reaction ATP + H2O + a folded polypeptide = ADP + phosphate + an unfolded polypeptide.. Together with its co-chaperonin GroES, plays an essential role in assisting protein folding. The GroEL-GroES system forms a nano-cage that allows encapsulation of the non-native substrate proteins and provides a physical environment optimized to promote and accelerate protein folding. The polypeptide is Chaperonin GroEL (Yersinia pestis bv. Antiqua (strain Antiqua)).